The primary structure comprises 126 residues: LWamide neuropeptides (126 aa).

A propeptide spans 1–2 (1); that stretch reads KR. A disordered region spans residues 1–126; that stretch reads KRQQPGLWGR…KSAIPKAKPQ (126 aa). Position 8 is a tryptophan amide (Trp-8). A propeptide spans 11–15 (2); it reads SADPQ. Tryptophan amide is present on residues Trp-20 and Trp-29. Residues 32–36 constitute a propeptide, 2; the sequence is SADPQ. Residues Trp-41 and Trp-50 each carry the tryptophan amide modification. Positions 53-57 are cleaved as a propeptide — 2; the sequence is SADPQ. Tryptophan amide occurs at positions 62 and 71. The propeptide at 74-78 is 2; sequence SADPQ. Trp-83 is modified (tryptophan amide). Positions 86-93 are cleaved as a propeptide — 3; that stretch reads SAGSGKRQ. Tryptophan amide is present on Trp-99. Residues 102-126 constitute a propeptide, 4; it reads SAEPPQYKELEDLKQKSAIPKAKPQ. Basic and acidic residues predominate over residues 107-116; that stretch reads QYKELEDLKQ.

It belongs to the LWamide neuropeptide family.

The protein resides in the secreted. Its function is as follows. Metamorphosin A may be part of an internal signaling system involved in control of metamorphosis. The protein is LWamide neuropeptides of Anemonia sulcata (Mediterranean snakelocks sea anemone).